A 346-amino-acid polypeptide reads, in one-letter code: S-adenosylmethionine:tRNA ribosyltransferase-isomerase (346 aa).

Belongs to the QueA family. Monomer.

The protein localises to the cytoplasm. It catalyses the reaction 7-aminomethyl-7-carbaguanosine(34) in tRNA + S-adenosyl-L-methionine = epoxyqueuosine(34) in tRNA + adenine + L-methionine + 2 H(+). It participates in tRNA modification; tRNA-queuosine biosynthesis. Transfers and isomerizes the ribose moiety from AdoMet to the 7-aminomethyl group of 7-deazaguanine (preQ1-tRNA) to give epoxyqueuosine (oQ-tRNA). The protein is S-adenosylmethionine:tRNA ribosyltransferase-isomerase of Nitrosomonas eutropha (strain DSM 101675 / C91 / Nm57).